Consider the following 560-residue polypeptide: Nuclear hormone receptor family member nhr-8 (560 aa).

The interval 1 to 21 (MPSSSPSMDESRRSAVPPKEP) is disordered. Positions 23 to 98 (GRICTVCSDR…VGMNSEWLND (76 aa)) form a DNA-binding region, nuclear receptor. 2 consecutive NR C4-type zinc fingers follow at residues 26–46 (CTVC…CESC) and 62–86 (CPFS…LNKC). An NR LBD domain is found at 336-560 (DEITLLEELH…PLIRELCSFE (225 aa)).

The protein belongs to the nuclear hormone receptor family.

It is found in the nucleus. In terms of biological role, orphan nuclear receptor. The chain is Nuclear hormone receptor family member nhr-8 (nhr-8) from Caenorhabditis elegans.